Consider the following 443-residue polypeptide: Probable D-serine dehydratase (443 aa).

The residue at position 116 (K116) is an N6-(pyridoxal phosphate)lysine.

This sequence belongs to the serine/threonine dehydratase family. DsdA subfamily. Requires pyridoxal 5'-phosphate as cofactor.

It carries out the reaction D-serine = pyruvate + NH4(+). The chain is Probable D-serine dehydratase from Bacillus cereus (strain ATCC 14579 / DSM 31 / CCUG 7414 / JCM 2152 / NBRC 15305 / NCIMB 9373 / NCTC 2599 / NRRL B-3711).